The chain runs to 325 residues: MRAELCADLEEALRAGGHEVVRIERACFDIFVRTRDGRAYIVKVLINADGLRREVAEELRRISHFLEAVPVVVALKRHTGPLEKGVVYHRYEVPVLDPLTFARLVEGEPPKAVADRGGQYVVIRADEVDELDVSRVRRRQLRREGGRITLARAEEADVEGVPVELKTPEHVDTGRDRMTRFERRVAELLERMGAERTGKVRRAPFKLLAKDGETVLARAEEGGDRESIALRDVASATGSMGVIVTRERCKDTYVPTIDIGTLEEIKDLEDLKEYLQERDPEERVRRLVEEAGITSPREIAQRTGIRESVIREFLRRMGITDERKV.

Residues 128–190 (VDELDVSRVR…FERRVAELLE (63 aa)) form the HTH cro/C1-type domain. The segment at residues 139-158 (RQLRREGGRITLARAEEADV) is a DNA-binding region (H-T-H motif).

The chain is Putative HTH-type transcriptional regulatory protein MK1005 from Methanopyrus kandleri (strain AV19 / DSM 6324 / JCM 9639 / NBRC 100938).